A 475-amino-acid polypeptide reads, in one-letter code: ESX-3 secretion system protein EccD3 (475 aa).

The next 11 helical transmembrane spans lie at 132-152 (IARG…GLSV), 161-181 (LLGQ…ALAV), 186-206 (AVLA…AFAL), 212-232 (FGAP…LISM), 241-261 (IAVF…AGAA), 264-284 (WVIS…IVTV), 333-353 (GVIA…VSSA), 354-374 (NASP…ALRA), 384-404 (AWLL…FVIG), 409-429 (AALW…VAAL), and 453-473 (GLDA…SLVL).

This sequence belongs to the EccD/Snm4 family. Part of the ESX-3 / type VII secretion system (T7SS), which is composed of cytosolic and membrane components. The ESX-3 membrane complex is composed of EccB3, EccC3, EccD3 and EccE3.

Its subcellular location is the cell inner membrane. Part of the ESX-3 specialized secretion system, which is required for siderophore-mediated iron acquisition and for the secretion of EsxH and EsxG. The polypeptide is ESX-3 secretion system protein EccD3 (Mycolicibacterium smegmatis (strain ATCC 700084 / mc(2)155) (Mycobacterium smegmatis)).